Consider the following 110-residue polypeptide: Hydrogenase maturation factor HypA (110 aa).

A Ni(2+)-binding site is contributed by His2. Zn(2+)-binding residues include Cys73, Cys76, Cys87, and Cys89.

The protein belongs to the HypA/HybF family.

Functionally, involved in the maturation of [NiFe] hydrogenases. Required for nickel insertion into the metal center of the hydrogenase. The polypeptide is Hydrogenase maturation factor HypA (Archaeoglobus fulgidus (strain ATCC 49558 / DSM 4304 / JCM 9628 / NBRC 100126 / VC-16)).